The chain runs to 812 residues: ATP-dependent zinc metalloprotease FtsH (812 aa).

Topologically, residues 1-21 (MPPSPPRPPKFPGSGRPESPN) are cytoplasmic. The chain crosses the membrane as a helical span at residues 22–42 (WGVWVMVLLIVGVLAFGFFTP). Residues 43–241 (ESFGLGPRKE…TKFKRESGSW (199 aa)) are Extracellular-facing. The chain crosses the membrane as a helical span at residues 242–262 (GGILLNLLPIVLILVILFFMF). The Cytoplasmic portion of the chain corresponds to 263–812 (RAQSGGARGA…EFGKDGGEKK (550 aa)). 333–340 (GAPGTGKT) is an ATP binding site. A Zn(2+)-binding site is contributed by histidine 555. The active site involves glutamate 556. Residues histidine 559 and aspartate 631 each coordinate Zn(2+). The disordered stretch occupies residues 739–812 (KNPPARVTPP…EFGKDGGEKK (74 aa)). Basic and acidic residues-rich tracts occupy residues 757 to 785 (QPGK…RKME) and 803 to 812 (EFGKDGGEKK).

In the central section; belongs to the AAA ATPase family. This sequence in the C-terminal section; belongs to the peptidase M41 family. Homohexamer. Zn(2+) serves as cofactor.

The protein localises to the cell membrane. Its function is as follows. Acts as a processive, ATP-dependent zinc metallopeptidase for both cytoplasmic and membrane proteins. Plays a role in the quality control of integral membrane proteins. The polypeptide is ATP-dependent zinc metalloprotease FtsH (Akkermansia muciniphila (strain ATCC BAA-835 / DSM 22959 / JCM 33894 / BCRC 81048 / CCUG 64013 / CIP 107961 / Muc)).